A 92-amino-acid chain; its full sequence is DNA-directed RNA polymerase subunit omega (92 aa).

Belongs to the RNA polymerase subunit omega family. The RNAP catalytic core consists of 2 alpha, 1 beta, 1 beta' and 1 omega subunit. When a sigma factor is associated with the core the holoenzyme is formed, which can initiate transcription.

It carries out the reaction RNA(n) + a ribonucleoside 5'-triphosphate = RNA(n+1) + diphosphate. Its function is as follows. Promotes RNA polymerase assembly. Latches the N- and C-terminal regions of the beta' subunit thereby facilitating its interaction with the beta and alpha subunits. In Shewanella denitrificans (strain OS217 / ATCC BAA-1090 / DSM 15013), this protein is DNA-directed RNA polymerase subunit omega.